The following is a 200-amino-acid chain: Large ribosomal subunit protein bL25 (200 aa).

The protein belongs to the bacterial ribosomal protein bL25 family. CTC subfamily. As to quaternary structure, part of the 50S ribosomal subunit; part of the 5S rRNA/L5/L18/L25 subcomplex. Contacts the 5S rRNA. Binds to the 5S rRNA independently of L5 and L18.

Functionally, this is one of the proteins that binds to the 5S RNA in the ribosome where it forms part of the central protuberance. The polypeptide is Large ribosomal subunit protein bL25 (Leifsonia xyli subsp. xyli (strain CTCB07)).